Consider the following 279-residue polypeptide: Probable flavonol synthase 4 (279 aa).

The tract at residues 1–25 (MEVERDQHKPPLSLQNNKIPSSQNF) is disordered. Positions 13–25 (SLQNNKIPSSQNF) are enriched in polar residues. The Fe2OG dioxygenase domain occupies 156-256 (GAGYLMKINY…RMSSVVHIKP (101 aa)). Position 164–166 (164–166 (NYY)) interacts with 2-oxoglutarate. The Fe cation site is built by His-181, Asp-183, and His-237. 2-oxoglutarate is bound at residue 247 to 249 (RMS).

Belongs to the iron/ascorbate-dependent oxidoreductase family. Requires Fe(2+) as cofactor.

The catalysed reaction is a (2R,3R)-dihydroflavonol + 2-oxoglutarate + O2 = a flavonol + succinate + CO2 + H2O. Its pathway is secondary metabolite biosynthesis; flavonoid biosynthesis. The polypeptide is Probable flavonol synthase 4 (FLS4) (Arabidopsis thaliana (Mouse-ear cress)).